The primary structure comprises 416 residues: MDLEKLIKIGEKEGFETEVLFVKSYEVSVDLDGKSVDSFQTGISYGIGVRVIKDGKVGFAYANKFDENIVYKAMKNLVEDKYTEFAHPQKYKEPKGMFYKEILDLDEEKLLEDLITMRDIALDNNAIVLSGGVSKEVGYARLINSNGVDVEEQDTYFSAAISIMYDGETSYECRTRHNIFDVEEISYRALDLAKKSANGKAISYKGNIVLSPRALYDLLSYTLMPAFSAENVQRDRSVLKGKIGEQIFGENITIIDDGTLDYALYSSKCDGEGTATQKTVLVENGVLKNYLYDIKRANREGKTSTGNASRGYRSLPYVSPTNFIIKETKNSLDDFDEYVYINGVIGSHTSNPITGDFAVEIQNSYYYKNGKIIPIKRGMFGGNIFEMFKEAIPLNDVEQRGKLISPSVVFKGEIIN.

This is an uncharacterized protein from Methanocaldococcus jannaschii (strain ATCC 43067 / DSM 2661 / JAL-1 / JCM 10045 / NBRC 100440) (Methanococcus jannaschii).